Consider the following 491-residue polypeptide: Cobyric acid synthase (491 aa).

The 188-residue stretch at 250-437 folds into the GATase cobBQ-type domain; that stretch reads RLRVVVPVLP…LHGIFDHPAA (188 aa). Cys331 functions as the Nucleophile in the catalytic mechanism. His429 is a catalytic residue.

This sequence belongs to the CobB/CobQ family. CobQ subfamily.

It participates in cofactor biosynthesis; adenosylcobalamin biosynthesis. In terms of biological role, catalyzes amidations at positions B, D, E, and G on adenosylcobyrinic A,C-diamide. NH(2) groups are provided by glutamine, and one molecule of ATP is hydrogenolyzed for each amidation. This Xanthomonas campestris pv. campestris (strain B100) protein is Cobyric acid synthase.